The sequence spans 143 residues: Large ribosomal subunit protein uL16 (143 aa).

Positions 1 to 17 are enriched in basic residues; that stretch reads MLQPKRTKFRKAHKGRI. Residues 1–20 form a disordered region; it reads MLQPKRTKFRKAHKGRIHGN.

It belongs to the universal ribosomal protein uL16 family. In terms of assembly, part of the 50S ribosomal subunit.

Functionally, binds 23S rRNA and is also seen to make contacts with the A and possibly P site tRNAs. The sequence is that of Large ribosomal subunit protein uL16 from Zymomonas mobilis subsp. mobilis (strain ATCC 31821 / ZM4 / CP4).